The primary structure comprises 512 residues: Cytoplasmic tRNA 2-thiolation protein 2-A (512 aa).

Belongs to the CTU2/NCS2 family.

It is found in the cytoplasm. The protein operates within tRNA modification; 5-methoxycarbonylmethyl-2-thiouridine-tRNA biosynthesis. Its function is as follows. Plays a central role in 2-thiolation of mcm(5)S(2)U at tRNA wobble positions of tRNA(Lys), tRNA(Glu) and tRNA(Gln). May act by forming a heterodimer with ctu1/atpbd3 that ligates sulfur from thiocarboxylated urm1 onto the uridine of tRNAs at wobble position. The chain is Cytoplasmic tRNA 2-thiolation protein 2-A (ctu2-a) from Xenopus laevis (African clawed frog).